The sequence spans 95 residues: Integration host factor subunit alpha (95 aa).

The disordered stretch occupies residues 51-71 (NFDLRDKNERPGRNPKTGEDI). Basic and acidic residues predominate over residues 53 to 69 (DLRDKNERPGRNPKTGE).

This sequence belongs to the bacterial histone-like protein family. Heterodimer of an alpha and a beta chain.

Its function is as follows. This protein is one of the two subunits of integration host factor, a specific DNA-binding protein that functions in genetic recombination as well as in transcriptional and translational control. This chain is Integration host factor subunit alpha, found in Vibrio vulnificus (strain CMCP6).